The chain runs to 281 residues: 3-methyl-2-oxobutanoate hydroxymethyltransferase (281 aa).

D44 and D83 together coordinate Mg(2+). 3-methyl-2-oxobutanoate-binding positions include 44–45, D83, and K112; that span reads DS. E114 serves as a coordination point for Mg(2+). E180 acts as the Proton acceptor in catalysis. The segment at 251-281 is disordered; sequence RNGTFPGPEHSSRMDPAELAAALGSQDQATE.

The protein belongs to the PanB family. Homodecamer; pentamer of dimers. It depends on Mg(2+) as a cofactor.

The protein resides in the cytoplasm. The catalysed reaction is 3-methyl-2-oxobutanoate + (6R)-5,10-methylene-5,6,7,8-tetrahydrofolate + H2O = 2-dehydropantoate + (6S)-5,6,7,8-tetrahydrofolate. It functions in the pathway cofactor biosynthesis; (R)-pantothenate biosynthesis; (R)-pantoate from 3-methyl-2-oxobutanoate: step 1/2. Catalyzes the reversible reaction in which hydroxymethyl group from 5,10-methylenetetrahydrofolate is transferred onto alpha-ketoisovalerate to form ketopantoate. This Chloroflexus aurantiacus (strain ATCC 29364 / DSM 637 / Y-400-fl) protein is 3-methyl-2-oxobutanoate hydroxymethyltransferase.